A 184-amino-acid polypeptide reads, in one-letter code: Protein MEH1 (184 aa).

Gly-2 is lipidated: N-myristoyl glycine. S-palmitoyl cysteine attachment occurs at residues Cys-7 and Cys-8. Residues 30-71 (QGNANDEYDAEQMRLKEHEHEQKLLAREQELRDIVANTNDKL) are a coiled coil. The disordered stretch occupies residues 89–147 (LQEALDKRQQEEGGDSREDERSAGDDNLSGHSVPSSGSAQATTHQTAPRTNTFTLLTSP). Positions 92–112 (ALDKRQQEEGGDSREDERSAG) are enriched in basic and acidic residues. Residues 117-147 (SGHSVPSSGSAQATTHQTAPRTNTFTLLTSP) are compositionally biased toward polar residues. 2 positions are modified to phosphoserine: Ser-146 and Ser-149.

In terms of assembly, component of the GSE complex composed of GTR1, GTR2, SLM4, MEH1 and LTV1. Component of the EGO complex, at least composed of GTR2, SLM4 and MEH1.

It localises to the vacuole membrane. Its function is as follows. Component of the GSE complex, a GTPase complex required for intracellular sorting of GAP1 out of the endosome. Component of the EGO complex, a complex involved in the regulation of microautophagy. The protein is Protein MEH1 (MEH1) of Saccharomyces cerevisiae (strain ATCC 204508 / S288c) (Baker's yeast).